We begin with the raw amino-acid sequence, 236 residues long: Thrombin-like enzyme kangshuanmei (236 aa).

A Peptidase S1 domain is found at 1–227 (VIGGDECNIN…HLDWIQSIIA (227 aa)). Disulfide bonds link Cys7–Cys141, Cys28–Cys44, Cys78–Cys234, Cys120–Cys188, Cys152–Cys167, and Cys178–Cys203. His43 functions as the Charge relay system in the catalytic mechanism. The N-linked (GlcNAc...) asparagine glycan is linked to Asn81. The Charge relay system role is filled by Asp88. N-linked (GlcNAc...) asparagine glycosylation is found at Asn99 and Asn148. The active-site Charge relay system is the Ser182. An N-linked (GlcNAc...) asparagine glycan is attached at Asn229.

The protein belongs to the peptidase S1 family. Snake venom subfamily. In terms of assembly, monomer. Post-translationally, N-glycosylated by units composed of Fuc, Man, GlcNAc, Gal and NeuAC residues. In terms of tissue distribution, expressed by the venom gland.

The protein localises to the secreted. With respect to regulation, inhibited by 4-(2-aminoethyl)-benzensulfonyl fluoride. Not inhibited by antithrombin-III. Functionally, thrombin-like snake venom serine protease. Cleaves bonds after Arg and Lys, converts fibrinogen (FGA and FGB) to fibrin and releases both fibrinopeptides A and B, and fibrinogen peptide Bbeta1-42. Has a blood clotting activity. The polypeptide is Thrombin-like enzyme kangshuanmei (Gloydius brevicauda (Korean slamosa snake)).